A 159-amino-acid polypeptide reads, in one-letter code: 6,7-dimethyl-8-ribityllumazine synthase (159 aa).

5-amino-6-(D-ribitylamino)uracil-binding positions include Phe23, 58-60 (AYE), and 82-84 (TII). His90 functions as the Proton donor in the catalytic mechanism. Leu115 is a 5-amino-6-(D-ribitylamino)uracil binding site. Arg129 provides a ligand contact to (2S)-2-hydroxy-3-oxobutyl phosphate.

Belongs to the DMRL synthase family. As to quaternary structure, forms an icosahedral capsid composed of 60 subunits, arranged as a dodecamer of pentamers.

The enzyme catalyses (2S)-2-hydroxy-3-oxobutyl phosphate + 5-amino-6-(D-ribitylamino)uracil = 6,7-dimethyl-8-(1-D-ribityl)lumazine + phosphate + 2 H2O + H(+). The protein operates within cofactor biosynthesis; riboflavin biosynthesis; riboflavin from 2-hydroxy-3-oxobutyl phosphate and 5-amino-6-(D-ribitylamino)uracil: step 1/2. Functionally, catalyzes the formation of 6,7-dimethyl-8-ribityllumazine by condensation of 5-amino-6-(D-ribitylamino)uracil with 3,4-dihydroxy-2-butanone 4-phosphate. This is the penultimate step in the biosynthesis of riboflavin. The sequence is that of 6,7-dimethyl-8-ribityllumazine synthase from Blochmanniella floridana.